The sequence spans 131 residues: Methylglyoxal synthase (131 aa).

One can recognise an MGS-like domain in the interval 1 to 131 (MKIALIAHDK…GDLDYRKLRK (131 aa)). Substrate is bound by residues His8, Lys12, 34–37 (TGTT), and 54–55 (SG). Catalysis depends on Asp60, which acts as the Proton donor/acceptor. Position 87 (His87) interacts with substrate.

It belongs to the methylglyoxal synthase family.

It catalyses the reaction dihydroxyacetone phosphate = methylglyoxal + phosphate. Functionally, catalyzes the formation of methylglyoxal from dihydroxyacetone phosphate. The chain is Methylglyoxal synthase from Bacillus cereus (strain ATCC 10987 / NRS 248).